A 146-amino-acid polypeptide reads, in one-letter code: Hemoglobin subunit beta (146 aa).

Residue Val-1 is modified to N-acetylvaline. Residues His-2–His-146 enclose the Globin domain. Phosphoserine is present on Ser-44. Residue Lys-59 is modified to N6-acetyllysine. His-63 is a binding site for heme b. Position 82 is an N6-acetyllysine (Lys-82). His-92 is a binding site for heme b. The residue at position 93 (Cys-93) is an S-nitrosocysteine. The residue at position 144 (Lys-144) is an N6-acetyllysine.

The protein belongs to the globin family. In terms of assembly, heterotetramer of two alpha chains and two beta chains. As to expression, red blood cells.

In terms of biological role, involved in oxygen transport from the lung to the various peripheral tissues. The sequence is that of Hemoglobin subunit beta from Tamiasciurus hudsonicus (American red squirrel).